An 827-amino-acid chain; its full sequence is Discs large homolog 1-like protein (827 aa).

Disordered regions lie at residues 38–61 and 102–133; these read HQDE…TPGP and SPVV…ANPP. The span at 44 to 56 shows a compositional bias: polar residues; that stretch reads GSPQEPSSPQFTD. PDZ domains lie at 159–246, 254–341, and 403–484; these read EITL…RRRK, EIKL…AKPN, and KVVL…QYRP. The SH3 domain maps to 518–588; the sequence is KRSLYVRALF…PSKRRVEKKE (71 aa). The tract at residues 595-618 is disordered; that stretch reads VKFNSKSREKGDNPDDMLSKGQSG. In terms of domain architecture, Guanylate kinase-like spans 637 to 812; sequence SRPVIILGPM…IYDQVKQIIE (176 aa).

It belongs to the MAGUK family.

Its subcellular location is the membrane. Its function is as follows. May play a role in synapse assembly and function. The polypeptide is Discs large homolog 1-like protein (dlg1l) (Danio rerio (Zebrafish)).